We begin with the raw amino-acid sequence, 654 residues long: MSESPAQEARTRTALVLYGSETGNAQEVAEELGALAERLHFVTHVAEMNSVKATLLTILPQEMLRSFTFTIFVVSTTGQGEIPANARSFWRSLLLKKLPPTFLSGVNYVSFGLGDSSYPKFNWAARKLHKRLLQLGANEIYPRGEANAQHPEGLEGTFIPWITDFRSHLLDKYPLPEGLHPIPDDEQLPPKWVLRLQEPATTGDELTEGTLSSEQTVSDEYPGLTRLDHDVRPIPDALTATLVENRRVTPRTHWQDVRQISLTVPDAVTYAPGDMICITPKNFDEDVQALIDMMGWGEMADKLVSLAPGEKLQAAGELHAPPIPGLEKYPKLTLRALLMDYIDIRAIPRRSFFSAIAHYTSNEMHKERLLEFTNPEYLDEFWDYTSRPRRSILEVLHEFHSVKIPWQHVTTVFPVFRGRQFSIASGGELKRTSGGGAKFELLIAIVKYQTVIKRIREGVCTRYLSVLRPGSTLKVQLQRGGLSSSVNQLVGPTVLIGPGTGVAPLRSMLWEKAAFVKAYREEHPDANPPIGPTILLYGGRNRAADFFFEEEWQELSDLIGLQVFTAFSRDQRHKIYVQDIIRRNFGLFFRLLHDMNGSVYICGSSGRMPQAVREALIEAFEHGGQADGPQLARRGAEEYLIGMEKSGRYKQETW.

The region spanning 14–166 (ALVLYGSETG…TFIPWITDFR (153 aa)) is the Flavodoxin-like domain. Residues 20-25 (SETGNA), 75-78 (STTG), and 113-122 (LGDSSYPKFN) contribute to the FMN site. In terms of domain architecture, FAD-binding FR-type spans 235–485 (PDALTATLVE…QLQRGGLSSS (251 aa)). FAD contacts are provided by residues Arg-389, 419–422 (RQFS), and 458–461 (GVCT). Residues Thr-500, 568-569 (SR), and 574-578 (KIYVQ) each bind NADP(+). Trp-654 contacts FAD.

This sequence belongs to the NADPH-dependent diflavin oxidoreductase NDOR1 family. In the N-terminal section; belongs to the flavodoxin family. It in the C-terminal section; belongs to the flavoprotein pyridine nucleotide cytochrome reductase family. Interacts with dre2; as part of the cytosolic iron-sulfur (Fe-S) protein assembly (CIA) machinery. The cofactor is FAD. Requires FMN as cofactor.

Its subcellular location is the cytoplasm. It localises to the mitochondrion. It catalyses the reaction 2 oxidized [2Fe-2S]-[protein] + NADPH = 2 reduced [2Fe-2S]-[protein] + NADP(+) + H(+). In terms of biological role, NADPH-dependent reductase which is a central component of the cytosolic iron-sulfur (Fe-S) protein assembly (CIA) machinery. Transfers electrons from NADPH via its FAD and FMN prosthetic groups to the [2Fe-2S] cluster of dre2, another key component of the CIA machinery. In turn, this reduced cluster provides electrons for assembly of cytosolic iron-sulfur cluster proteins. Positively controls H(2)O(2)-induced cell death. The polypeptide is NADPH-dependent diflavin oxidoreductase 1 (Aspergillus fumigatus (strain ATCC MYA-4609 / CBS 101355 / FGSC A1100 / Af293) (Neosartorya fumigata)).